Reading from the N-terminus, the 241-residue chain is Pyrroloquinoline-quinone synthase (241 aa).

This sequence belongs to the PqqC family.

It carries out the reaction 6-(2-amino-2-carboxyethyl)-7,8-dioxo-1,2,3,4,7,8-hexahydroquinoline-2,4-dicarboxylate + 3 O2 = pyrroloquinoline quinone + 2 H2O2 + 2 H2O + H(+). Its pathway is cofactor biosynthesis; pyrroloquinoline quinone biosynthesis. In terms of biological role, ring cyclization and eight-electron oxidation of 3a-(2-amino-2-carboxyethyl)-4,5-dioxo-4,5,6,7,8,9-hexahydroquinoline-7,9-dicarboxylic-acid to PQQ. In Ruegeria pomeroyi (strain ATCC 700808 / DSM 15171 / DSS-3) (Silicibacter pomeroyi), this protein is Pyrroloquinoline-quinone synthase.